A 418-amino-acid polypeptide reads, in one-letter code: Tyrosine--tRNA ligase (418 aa).

Tyr-34 lines the L-tyrosine pocket. The short motif at 39–48 (PTADSLHLGH) is the 'HIGH' region element. Positions 169 and 173 each coordinate L-tyrosine. The 'KMSKS' region motif lies at 229–233 (KFGKS). Lys-232 contacts ATP. An S4 RNA-binding domain is found at 352-418 (LNLVDMLVTA…GKKKYAVLTY (67 aa)).

Belongs to the class-I aminoacyl-tRNA synthetase family. TyrS type 1 subfamily. As to quaternary structure, homodimer.

Its subcellular location is the cytoplasm. It catalyses the reaction tRNA(Tyr) + L-tyrosine + ATP = L-tyrosyl-tRNA(Tyr) + AMP + diphosphate + H(+). Catalyzes the attachment of tyrosine to tRNA(Tyr) in a two-step reaction: tyrosine is first activated by ATP to form Tyr-AMP and then transferred to the acceptor end of tRNA(Tyr). The sequence is that of Tyrosine--tRNA ligase from Streptococcus pyogenes serotype M3 (strain SSI-1).